The primary structure comprises 81 residues: Photosystem I iron-sulfur center (81 aa).

2 consecutive 4Fe-4S ferredoxin-type domains span residues 2 to 31 (SHTV…MVPW) and 37 to 68 (GQIA…VRVY). 8 residues coordinate [4Fe-4S] cluster: Cys11, Cys14, Cys17, Cys21, Cys48, Cys51, Cys54, and Cys58.

The eukaryotic PSI reaction center is composed of at least 11 subunits. The cofactor is [4Fe-4S] cluster.

It is found in the plastid. It localises to the chloroplast thylakoid membrane. The enzyme catalyses reduced [plastocyanin] + hnu + oxidized [2Fe-2S]-[ferredoxin] = oxidized [plastocyanin] + reduced [2Fe-2S]-[ferredoxin]. In terms of biological role, apoprotein for the two 4Fe-4S centers FA and FB of photosystem I (PSI); essential for photochemical activity. FB is the terminal electron acceptor of PSI, donating electrons to ferredoxin. The C-terminus interacts with PsaA/B/D and helps assemble the protein into the PSI complex. Required for binding of PsaD and PsaE to PSI. PSI is a plastocyanin/cytochrome c6-ferredoxin oxidoreductase, converting photonic excitation into a charge separation, which transfers an electron from the donor P700 chlorophyll pair to the spectroscopically characterized acceptors A0, A1, FX, FA and FB in turn. The chain is Photosystem I iron-sulfur center from Phaeodactylum tricornutum (strain CCAP 1055/1).